A 281-amino-acid polypeptide reads, in one-letter code: Digeranylgeranylglyceryl phosphate synthase (281 aa).

Transmembrane regions (helical) follow at residues 7–27, 32–52, 72–91, 95–117, 128–148, 193–213, 214–234, and 258–278; these read ILRP…ALIT, FSVL…NVIN, GRIS…ALAS, FYLG…YYAW, ITIS…LGEV, ISGV…PSLY, LLGI…AVFL, and VGMA…TALT.

Belongs to the UbiA prenyltransferase family. DGGGP synthase subfamily. It depends on Mg(2+) as a cofactor.

The protein resides in the cell membrane. It catalyses the reaction sn-3-O-(geranylgeranyl)glycerol 1-phosphate + (2E,6E,10E)-geranylgeranyl diphosphate = 2,3-bis-O-(geranylgeranyl)-sn-glycerol 1-phosphate + diphosphate. The protein operates within membrane lipid metabolism; glycerophospholipid metabolism. Prenyltransferase that catalyzes the transfer of the geranylgeranyl moiety of geranylgeranyl diphosphate (GGPP) to the C2 hydroxyl of (S)-3-O-geranylgeranylglyceryl phosphate (GGGP). This reaction is the second ether-bond-formation step in the biosynthesis of archaeal membrane lipids. This Methanothermobacter thermautotrophicus (strain ATCC 29096 / DSM 1053 / JCM 10044 / NBRC 100330 / Delta H) (Methanobacterium thermoautotrophicum) protein is Digeranylgeranylglyceryl phosphate synthase.